Consider the following 233-residue polypeptide: 2-C-methyl-D-erythritol 4-phosphate cytidylyltransferase (233 aa).

The protein belongs to the IspD/TarI cytidylyltransferase family. IspD subfamily.

The enzyme catalyses 2-C-methyl-D-erythritol 4-phosphate + CTP + H(+) = 4-CDP-2-C-methyl-D-erythritol + diphosphate. Its pathway is isoprenoid biosynthesis; isopentenyl diphosphate biosynthesis via DXP pathway; isopentenyl diphosphate from 1-deoxy-D-xylulose 5-phosphate: step 2/6. Catalyzes the formation of 4-diphosphocytidyl-2-C-methyl-D-erythritol from CTP and 2-C-methyl-D-erythritol 4-phosphate (MEP). The protein is 2-C-methyl-D-erythritol 4-phosphate cytidylyltransferase of Lachnoclostridium phytofermentans (strain ATCC 700394 / DSM 18823 / ISDg) (Clostridium phytofermentans).